Consider the following 110-residue polypeptide: Small ribosomal subunit protein uS17 (110 aa).

Belongs to the universal ribosomal protein uS17 family. Part of the 30S ribosomal subunit.

One of the primary rRNA binding proteins, it binds specifically to the 5'-end of 16S ribosomal RNA. In Petrotoga mobilis (strain DSM 10674 / SJ95), this protein is Small ribosomal subunit protein uS17.